We begin with the raw amino-acid sequence, 1019 residues long: Photoactivated adenylate cyclase subunit alpha (1019 aa).

Positions 55–148 constitute a BLUF 1 domain; sequence LRRLMYLSAS…GRMYGEWHMK (94 aa). The Guanylate cyclase 1 domain occupies 204-332; sequence VVTFIYLVEF…DCINTASRIT (129 aa). The BLUF 2 domain maps to 467–559; the sequence is LITLTYISQA…RVYGSPLDMT (93 aa). Positions 615–744 constitute a Guanylate cyclase 2 domain; that stretch reads VMLATDICSF…EVSARVMEVE (130 aa). The tract at residues 822–861 is disordered; the sequence is GTNAPGRGAPAGGIPSSPKVRPPGRTNSVSSYTPDPNEAL. Over residues 825-839 the composition is skewed to low complexity; it reads APGRGAPAGGIPSSP. A compositionally biased stretch (polar residues) spans 846 to 855; that stretch reads RTNSVSSYTP.

The protein belongs to the adenylyl cyclase class-4/guanylyl cyclase family. Heterotetramer of two alpha and two beta subunits. FAD is required as a cofactor.

It localises to the cell projection. Its subcellular location is the cilium. The protein resides in the flagellum. The enzyme catalyses ATP = 3',5'-cyclic AMP + diphosphate. Its activity is regulated as follows. Activity increased by up to 80-fold under blue light. In terms of biological role, acts as a blue light photoreceptor for the step-up photophobic response. Mediates photoavoidance. This is Photoactivated adenylate cyclase subunit alpha from Euglena gracilis.